The chain runs to 444 residues: UDP-N-acetylmuramoylalanine--D-glutamate ligase (444 aa).

Residue 109–115 (GSNGKTT) participates in ATP binding.

Belongs to the MurCDEF family.

It localises to the cytoplasm. The catalysed reaction is UDP-N-acetyl-alpha-D-muramoyl-L-alanine + D-glutamate + ATP = UDP-N-acetyl-alpha-D-muramoyl-L-alanyl-D-glutamate + ADP + phosphate + H(+). It participates in cell wall biogenesis; peptidoglycan biosynthesis. Functionally, cell wall formation. Catalyzes the addition of glutamate to the nucleotide precursor UDP-N-acetylmuramoyl-L-alanine (UMA). The sequence is that of UDP-N-acetylmuramoylalanine--D-glutamate ligase from Bacteroides thetaiotaomicron (strain ATCC 29148 / DSM 2079 / JCM 5827 / CCUG 10774 / NCTC 10582 / VPI-5482 / E50).